A 456-amino-acid chain; its full sequence is Kynurenine 3-monooxygenase (456 aa).

This sequence belongs to the aromatic-ring hydroxylase family. KMO subfamily. The cofactor is FAD.

It catalyses the reaction L-kynurenine + NADPH + O2 + H(+) = 3-hydroxy-L-kynurenine + NADP(+) + H2O. It participates in cofactor biosynthesis; NAD(+) biosynthesis; quinolinate from L-kynurenine: step 1/3. Its function is as follows. Catalyzes the hydroxylation of L-kynurenine (L-Kyn) to form 3-hydroxy-L-kynurenine (L-3OHKyn). Required for synthesis of quinolinic acid. This is Kynurenine 3-monooxygenase from Xanthomonas campestris pv. campestris (strain B100).